Consider the following 419-residue polypeptide: MDVDNGEGQVQVHLKTKQEHYAVPDVPYAIDGTVTTAELNTFVNALLLSKGSSAVDFDFLVFDEYLRGRLCDHLREKAISFEDAIEIEYVERFPAPEPQDCLLHDDWVSAVKASGKWILTGCYDNTLNIWTNKGKHILTIPGHTAPIKAVDWISLDDDTGRFVSSSQDQTAMLWQWNVGANTVECVSVCKGHERGVDSVSVSPDGQRFATGSWDTMLKVWSAELEDAGEGTSKRMKESGVRTPKITLQGHRESISAVQWMDASTLLTGSWDHTLKVWDLSLEGIKAEISTNKSIFDASYSKLNHLILTASADKNLRLYDSRTNQGSVVRNTYLGHNAWVQTVMWSTTEEFLFVSGSYDNQNKLWDCRSPKAPLYDLLGHGEKVLDIDWTNPKYIVSGGSDNTVRVFKSRKALVENMDTK.

Residues 10 to 91 (VQVHLKTKQE…EDAIEIEYVE (82 aa)) are ubiquitin-like (UBL) domain. 7 WD repeats span residues 103–141 (LHDDWVSAVKASGKWILTGCYDNTLNIWTNKGKHILTIP), 142–184 (GHTA…NTVE), 191–230 (GHERGVDSVSVSPDGQRFATGSWDTMLKVWSAELEDAGEG), 249–287 (GHRESISAVQWMDASTLLTGSWDHTLKVWDLSLEGIKAE), 289–328 (STNKSIFDASYSKLNHLILTASADKNLRLYDSRTNQGSVV), 334–374 (GHNA…APLY), and 378–416 (GHGEKVLDIDWTNPKYIVSGGSDNTVRVFKSRKALVENM).

This sequence belongs to the WD repeat WDR12/YTM1 family.

The protein resides in the nucleus. It localises to the nucleolus. The protein localises to the nucleoplasm. Its function is as follows. Required for maturation of ribosomal RNAs and formation of the large ribosomal subunit. This chain is Ribosome biogenesis protein WDR12 homolog, found in Drosophila persimilis (Fruit fly).